Here is a 102-residue protein sequence, read N- to C-terminus: Citrate lyase acyl carrier protein (102 aa).

Serine 14 bears the O-(phosphoribosyl dephospho-coenzyme A)serine mark.

This sequence belongs to the CitD family. Oligomer with a subunit composition of (alpha,beta,gamma)6.

The protein localises to the cytoplasm. Functionally, covalent carrier of the coenzyme of citrate lyase. The chain is Citrate lyase acyl carrier protein from Streptococcus equi subsp. equi (strain 4047).